A 145-amino-acid polypeptide reads, in one-letter code: D-aminoacyl-tRNA deacylase (145 aa).

Residues 137–138 carry the Gly-cisPro motif, important for rejection of L-amino acids motif; it reads GP.

This sequence belongs to the DTD family. As to quaternary structure, homodimer.

It localises to the cytoplasm. The catalysed reaction is glycyl-tRNA(Ala) + H2O = tRNA(Ala) + glycine + H(+). The enzyme catalyses a D-aminoacyl-tRNA + H2O = a tRNA + a D-alpha-amino acid + H(+). Its function is as follows. An aminoacyl-tRNA editing enzyme that deacylates mischarged D-aminoacyl-tRNAs. Also deacylates mischarged glycyl-tRNA(Ala), protecting cells against glycine mischarging by AlaRS. Acts via tRNA-based rather than protein-based catalysis; rejects L-amino acids rather than detecting D-amino acids in the active site. By recycling D-aminoacyl-tRNA to D-amino acids and free tRNA molecules, this enzyme counteracts the toxicity associated with the formation of D-aminoacyl-tRNA entities in vivo and helps enforce protein L-homochirality. The chain is D-aminoacyl-tRNA deacylase from Cereibacter sphaeroides (strain KD131 / KCTC 12085) (Rhodobacter sphaeroides).